A 67-amino-acid chain; its full sequence is MSKKCQVTGKKPITGHNVSHANNKTKRRFLPNIRTVRVTLPDGTKKKIKVSAKGLRILKKKNFQVDL.

The protein belongs to the bacterial ribosomal protein bL28 family.

The protein is Large ribosomal subunit protein bL28 of Nitratiruptor sp. (strain SB155-2).